A 137-amino-acid chain; its full sequence is Envelope glycoprotein L (137 aa).

An N-terminal signal peptide occupies residues 1–25 (MRAVGVFLATCLVTIFVLPTWGNWA). Positions 23–128 (NWAYPCCHVT…SVEDLFGANL (106 aa)) are interaction with gH. Disulfide bonds link cysteine 28–cysteine 56 and cysteine 29–cysteine 79.

The protein belongs to the herpesviridae glycoprotein L family. As to quaternary structure, interacts with glycoprotein H (gH); this interaction is necessary for the correct processing and cell surface expression of gH. The heterodimer gH/gL seems to interact with gB trimers during fusion. The heterodimer gH/gL interacts with host EPHA2 to facilitate virus internalization and fusion.

The protein localises to the virion membrane. Its subcellular location is the host cell membrane. It is found in the host Golgi apparatus. The protein resides in the host trans-Golgi network. The heterodimer glycoprotein H-glycoprotein L is required for the fusion of viral and plasma membranes leading to virus entry into the host cell. Acts as a functional inhibitor of gH and maintains gH in an inhibited form. Upon binding to host integrins, gL dissociates from gH leading to activation of the viral fusion glycoproteins gB and gH. The heterodimer gH/gL targets also host EPHA2 to promote viral entry. In Homo sapiens (Human), this protein is Envelope glycoprotein L.